A 157-amino-acid chain; its full sequence is Phosphopantetheine adenylyltransferase (157 aa).

T8 contributes to the substrate binding site. Residues 8–9 (TF) and H16 contribute to the ATP site. Substrate is bound by residues K40, T72, and R86. ATP is bound by residues 87 to 89 (GLR), E97, and 122 to 128 (YSFLSSS).

This sequence belongs to the bacterial CoaD family. In terms of assembly, homohexamer. It depends on Mg(2+) as a cofactor.

The protein resides in the cytoplasm. The catalysed reaction is (R)-4'-phosphopantetheine + ATP + H(+) = 3'-dephospho-CoA + diphosphate. Its pathway is cofactor biosynthesis; coenzyme A biosynthesis; CoA from (R)-pantothenate: step 4/5. Its function is as follows. Reversibly transfers an adenylyl group from ATP to 4'-phosphopantetheine, yielding dephospho-CoA (dPCoA) and pyrophosphate. The chain is Phosphopantetheine adenylyltransferase from Prochlorococcus marinus (strain MIT 9215).